Reading from the N-terminus, the 818-residue chain is FAD-dependent monooxygenase anuJ (818 aa).

The FAD site is built by E46, A60, R122, D329, and G342. The next 3 membrane-spanning stretches (helical) occupy residues V471 to V491, F539 to V559, and L571 to I591. An N-linked (GlcNAc...) asparagine glycan is attached at N614. 2 helical membrane-spanning segments follow: residues I621 to V641 and A647 to A667. N683 carries an N-linked (GlcNAc...) asparagine glycan. Transmembrane regions (helical) follow at residues W743–L763 and F778–L798.

It belongs to the paxM FAD-dependent monooxygenase family.

It localises to the membrane. Functionally, highly reducing polyketide synthase; part of the gene cluster that mediates the biosynthesis of annullatin D, an alkylated aromatic polyketide with a fused dihydrobenzofuran lactone ring system that exhibits potent agonistic activities toward the cannabinoid receptors. AnuJ does not seem to play a role within the pathway. The annullatin backbone 2-hydroxymethyl-3-pentylphenol is assembled from one acetyl-CoA starter unit and 5 malonyl-CoA elongation units by cooperation of the highly reducing polyketide synthase anuA, the short-chain dehydrogenase anuB and the oxidoreductase anuC, before being hydroxylated at the C-5 alkyl chain by the cytochrome P450 monooxygenase anuE to form (8S)-annullatin E. The prenyltransferase anuH subsequently installs one isoprenyl group at the benzene ring to form (8S)-annullatin J. Enzymatic or nonenzymatic dihydro-benzofuran ring formation between the prenyl and the phenolic hydroxyl groups in (8S)-annullatin J results in two diastereomers (2S,9S)-annullatin H and compound 12. The intermediate (2S,9S)-annullatin H is then converted to (2S,9S)-annullatin D by the FAD-linked oxidoreductase anuG-catalyzed five-member lactone ring formation. The isomer 12 acts as a substrate for the short-chain dehydrogenase anuF and is oxidized to (2R)-annullatin F, which is subsequently acetylated by an acetyltransferase leading to (2R)-annullatin G formation. The remaining enzymes identified within the cluster, anuD, anuI and anuJ, seem not to be involved in annullatin biosynthesis. The sequence is that of FAD-dependent monooxygenase anuJ from Penicillium roqueforti (strain FM164).